We begin with the raw amino-acid sequence, 183 residues long: Glutathione-regulated potassium-efflux system ancillary protein KefG (183 aa).

Belongs to the NAD(P)H dehydrogenase (quinone) family. KefG subfamily. In terms of assembly, interacts with KefB.

It is found in the cell inner membrane. The enzyme catalyses a quinone + NADH + H(+) = a quinol + NAD(+). It carries out the reaction a quinone + NADPH + H(+) = a quinol + NADP(+). In terms of biological role, regulatory subunit of a potassium efflux system that confers protection against electrophiles. Required for full activity of KefB. This is Glutathione-regulated potassium-efflux system ancillary protein KefG from Enterobacter sp. (strain 638).